The following is a 463-amino-acid chain: Glutamate--tRNA ligase 2 (463 aa).

Positions 10–20 match the 'HIGH' region motif; that stretch reads PSPTGFLHIGS. The 'KMSKS' region motif lies at 239–243; that stretch reads KLSKR. Residue Lys242 coordinates ATP.

Belongs to the class-I aminoacyl-tRNA synthetase family. Glutamate--tRNA ligase type 1 subfamily. As to quaternary structure, monomer.

The protein localises to the cytoplasm. It carries out the reaction tRNA(Glu) + L-glutamate + ATP = L-glutamyl-tRNA(Glu) + AMP + diphosphate. In terms of biological role, catalyzes the attachment of glutamate to tRNA(Glu) in a two-step reaction: glutamate is first activated by ATP to form Glu-AMP and then transferred to the acceptor end of tRNA(Glu). In Rickettsia akari (strain Hartford), this protein is Glutamate--tRNA ligase 2.